The following is a 549-amino-acid chain: Hydroxylamine reductase (549 aa).

Residues Cys3, Cys6, Cys15, and Cys21 each contribute to the [4Fe-4S] cluster site. Residues His248, Glu272, Cys316, Cys403, Cys431, Cys456, Glu490, and Lys492 each contribute to the hybrid [4Fe-2O-2S] cluster site. Cysteine persulfide is present on Cys403.

The protein belongs to the HCP family. Requires [4Fe-4S] cluster as cofactor. Hybrid [4Fe-2O-2S] cluster serves as cofactor.

It localises to the cytoplasm. It catalyses the reaction A + NH4(+) + H2O = hydroxylamine + AH2 + H(+). Catalyzes the reduction of hydroxylamine to form NH(3) and H(2)O. The polypeptide is Hydroxylamine reductase (Rhodospirillum rubrum (strain ATCC 11170 / ATH 1.1.1 / DSM 467 / LMG 4362 / NCIMB 8255 / S1)).